The following is a 193-amino-acid chain: Peptidyl-tRNA hydrolase (193 aa).

Residue His17 participates in tRNA binding. Catalysis depends on His22, which acts as the Proton acceptor. The tRNA site is built by Phe68, Asn70, and Asn116.

The protein belongs to the PTH family. As to quaternary structure, monomer.

It localises to the cytoplasm. The enzyme catalyses an N-acyl-L-alpha-aminoacyl-tRNA + H2O = an N-acyl-L-amino acid + a tRNA + H(+). Hydrolyzes ribosome-free peptidyl-tRNAs (with 1 or more amino acids incorporated), which drop off the ribosome during protein synthesis, or as a result of ribosome stalling. Functionally, catalyzes the release of premature peptidyl moieties from peptidyl-tRNA molecules trapped in stalled 50S ribosomal subunits, and thus maintains levels of free tRNAs and 50S ribosomes. The sequence is that of Peptidyl-tRNA hydrolase from Xanthomonas campestris pv. campestris (strain ATCC 33913 / DSM 3586 / NCPPB 528 / LMG 568 / P 25).